A 782-amino-acid chain; its full sequence is MSGEDGPAAGPGAAAAAARERRREQLRQWGARAGAEPGPGERRARTVRFERAAEFLAACAGGDLDEARLMLRAADPGPGAELDPAAPPPARAVLDSTNADGISALHQACIDENLEVVRFLVEQGATVNQADNEGWTPLHVAASCGYLDIARYLLSHGANIAAVNSDGDLPLDLAESDAMEGLLKAEIARRGVDVEAAKRAEEELLLHDTRCWLNGGAMPEARHPRTGASALHVAAAKGYIEVMRLLLQAGYDPELRDGDGWTPLHAAAHWGVEDACRLLAEHGGGMDSLTHAGQRPCDLADEEVLSLLEELARKQEDLRNQKEASQSRGQEPQAPSSSKHRRSSVCRLSSREKISLQDLSKERRPGGAGGPPIQDEDEGEEGPTEPPPAEPRTLNGVSSPPHPSPKSPVQLEEAPFSRRFGLLKTGSSGALGPPERRTAEGAPGAGLQRSASSSWLEGTSTQAKELRLARITPTPSPKLPEPSVLSEVTKPPPCLENSSPPSRIPEPESPAKPNVPTASTAPPADSRDRRRSYQMPVRDEESESQRKARSRLMRQSRRSTQGVTLTDLKEAEKAAGKAPESEKPAQSLDPSRRPRVPGVENSDSPAQRAEAPDGQGPGPQAAREHRKVGKEWRGPAEGEEAEPADRSQESSTLEGGPSARRQRWQRDLNPEPEPESEEPDGGFRTLYAELRRENERLREALTETTLRLAQLKVELERATQRQERFAERPALLELERFERRALERKAAELEEELKALSDLRADNQRLKDENAALIRVISKLSK.

The span at 1-17 (MSGEDGPAAGPGAAAAA) shows a compositional bias: low complexity. The tract at residues 1-43 (MSGEDGPAAGPGAAAAAARERRREQLRQWGARAGAEPGPGERR) is disordered. S2 carries the N-acetylserine modification. 4 ANK repeats span residues 100 to 129 (DGIS…TVNQ), 133 to 162 (EGWT…NIAA), 226 to 255 (TGAS…DPEL), and 259 to 288 (DGWT…GMDS). Residues 297 to 329 (CDLADEEVLSLLEELARKQEDLRNQKEASQSRG) are a coiled coil. The disordered stretch occupies residues 316-686 (EDLRNQKEAS…EEPDGGFRTL (371 aa)). The span at 323–337 (EASQSRGQEPQAPSS) shows a compositional bias: polar residues. Basic and acidic residues predominate over residues 349–365 (SSREKISLQDLSKERRP). The span at 374–383 (QDEDEGEEGP) shows a compositional bias: acidic residues. Phosphoserine occurs at positions 399, 407, 427, 452, and 509. A compositionally biased stretch (polar residues) spans 449-463 (RSASSSWLEGTSTQA). Over residues 537–546 (VRDEESESQR) the composition is skewed to basic and acidic residues. Residues 547–557 (KARSRLMRQSR) are compositionally biased toward basic residues. A Phosphothreonine; by CDC42BP and ROCK2 modification is found at T560. The span at 567–583 (DLKEAEKAAGKAPESEK) shows a compositional bias: basic and acidic residues. Phosphoserine is present on residues S604 and S647. Over residues 670 to 680 (PEPEPESEEPD) the composition is skewed to acidic residues. A coiled-coil region spans residues 681 to 782 (GGFRTLYAEL…LIRVISKLSK (102 aa)).

In terms of assembly, PP1 comprises a catalytic subunit, PPP1CA, PPP1CB or PPP1CC, and one or several targeting or regulatory subunits. PPP1R12C mediates binding to myosin. Interacts via its N-terminus with PPP1CB. Interacts with IL16. Interacts with the coiled-coil domain of MPRIP. Interacts with NOD2. Post-translationally, phosphorylation at Thr-560 is essential for its interaction with PPP1CB. As to expression, ubiquitously expressed. Highly expressed in heart.

The protein localises to the cytoplasm. It is found in the cytoskeleton. It localises to the stress fiber. Functionally, regulates myosin phosphatase activity. This Homo sapiens (Human) protein is Protein phosphatase 1 regulatory subunit 12C.